A 398-amino-acid chain; its full sequence is 1-aminocyclopropane-1-carboxylate oxidase homolog 5 (398 aa).

In terms of domain architecture, Fe2OG dioxygenase spans 247–347; sequence KSHIMFGQYY…RISMPCFVST (101 aa). 3 residues coordinate Fe cation: histidine 271, aspartate 273, and histidine 327. Residue arginine 338 coordinates 2-oxoglutarate.

This sequence belongs to the iron/ascorbate-dependent oxidoreductase family. The cofactor is Fe(2+). In terms of tissue distribution, expressed in etiolated seedlings, leaves, stems and flowers.

The protein is 1-aminocyclopropane-1-carboxylate oxidase homolog 5 (2A6) of Arabidopsis thaliana (Mouse-ear cress).